Consider the following 170-residue polypeptide: Adenine phosphoribosyltransferase (170 aa).

Belongs to the purine/pyrimidine phosphoribosyltransferase family. In terms of assembly, homodimer.

The protein localises to the cytoplasm. It catalyses the reaction AMP + diphosphate = 5-phospho-alpha-D-ribose 1-diphosphate + adenine. It participates in purine metabolism; AMP biosynthesis via salvage pathway; AMP from adenine: step 1/1. Functionally, catalyzes a salvage reaction resulting in the formation of AMP, that is energically less costly than de novo synthesis. The chain is Adenine phosphoribosyltransferase from Enterococcus faecalis (strain ATCC 700802 / V583).